We begin with the raw amino-acid sequence, 377 residues long: Nitric oxide reductase FlRd-NAD(+) reductase (377 aa).

Belongs to the FAD-dependent oxidoreductase family. The cofactor is FAD.

The protein resides in the cytoplasm. The catalysed reaction is 2 reduced [nitric oxide reductase rubredoxin domain] + NAD(+) + H(+) = 2 oxidized [nitric oxide reductase rubredoxin domain] + NADH. The protein operates within nitrogen metabolism; nitric oxide reduction. Functionally, one of at least two accessory proteins for anaerobic nitric oxide (NO) reductase. Reduces the rubredoxin moiety of NO reductase. The polypeptide is Nitric oxide reductase FlRd-NAD(+) reductase (Salmonella agona (strain SL483)).